A 611-amino-acid polypeptide reads, in one-letter code: Major facilitator superfamily domain-containing protein YCR023C (611 aa).

Residues Met1 to Lys89 are Extracellular-facing. Residues Ile90 to Arg110 form a helical membrane-spanning segment. At Asn111 to Thr152 the chain is on the cytoplasmic side. The helical transmembrane segment at Met153–Phe173 threads the bilayer. Over Arg174–Ala199 the chain is Extracellular. Residues Leu200 to Leu220 traverse the membrane as a helical segment. Residues Glu221 to Lys353 are Cytoplasmic-facing. Over residues Asp261–Glu271 the composition is skewed to basic and acidic residues. Residues Asp261 to Ile301 form a disordered region. Ser313 carries the post-translational modification Phosphoserine. A helical membrane pass occupies residues Val354–Asn372. The Extracellular segment spans residues Glu373–Gly413. The chain crosses the membrane as a helical span at residues Thr414–Val434. At Asp435–Thr442 the chain is on the cytoplasmic side. The helical transmembrane segment at Ile443–Phe463 threads the bilayer. Over Leu464 to Asp542 the chain is Extracellular. The chain crosses the membrane as a helical span at residues Val543–Tyr563. At Lys564–Thr611 the chain is on the cytoplasmic side. Residue Ser603 is modified to Phosphoserine.

Belongs to the major facilitator superfamily.

It localises to the membrane. The catalysed reaction is chloride(in) = chloride(out). Functionally, outward-rectifying chloride channel involved in chloride homeostasis. The polypeptide is Major facilitator superfamily domain-containing protein YCR023C (Saccharomyces cerevisiae (strain ATCC 204508 / S288c) (Baker's yeast)).